The primary structure comprises 933 residues: MTELKAKGPRAPHVAGGPPSPEVGSPLLCRPAAGPFEGSQTSDTLPEVSAIPISLDGLLFPRLCQGQDLPDEKTQDQQSLSDVEGAYSRAEATRGTGGSSSRPPGKDSGLLDSVLDTLLAPSGPGQSQPSPPACEVTSSWCLFGPELPEDPPAAPATQRVLSPLMSRSGGKTGDSSGTAAAHKVLPRGLSPSRQLLLPASGSPHWSGAPVKPSPQPTAVEVEEEDGSGSEDSAGPLLKGKPRVPGGAAAGGGAAAVPPGAAAGGVGLVPKEDSRFSAPRVALVEQDAPMAPGRSPLATTMMDFIHVPIVPLNHALLAARTRQLLEDESYDGGAGAASAFAPPQSSPSASSTPVAVGDFPDCAYPPDAEPKDNAYPLYGDFQPPALKIKEEEEGAEASARSPGSYLVAGANPAAFPDYPLGPPPQLPPRAPPSRPGEAAVTAAPASASVSSASSPGSTLECILYKAEGAPPQQGQFAPPPCKAPGAGGCLLPRDGLPSTSASAAAAGAAPALYPALGLNGLPQLGYQAAVLKESLQQVYPPYLNYLRPDSEASQSPQYSFESLPQKICLICGDEASGCHYGVLTCGSCKVFFKRAMEGQHNYLCAGRNDCIVDKIRRKNCPACRLRKCCQAGMVLGGRKFKKFNKVRVMRALDAVALPQPVGIPNESQVLSQRFTFSPGQDIQLIPPLIKLLMSIEPDVIYAGHDNSKPDTSSSLLTSLNQLGERQLLSVVKWSKSLPGFRNLHIDDQITLIQYSWMSLMVFGLGWRSYKHVSGQMLYFAPDLILNEQRMKESSFYSLCLTMWQIPQEFVKLQVSQEEFLCMKVLLLLNTIPLEGLRSQTQFEEMRSSYIRELIKAIGLRQKGVVPSSQRFYQLTKLLDNLHDLVKQLHLYCLNTFIQSRALSVEFPEMMSEVIAAQLPKILAGMVKPLLFHKK.

A disordered region spans residues 1–48 (MTELKAKGPRAPHVAGGPPSPEVGSPLLCRPAAGPFEGSQTSDTLPEV). Residues 1-164 (MTELKAKGPR…PATQRVLSPL (164 aa)) form an AF3; mediates transcriptional activation region. Residues 1–566 (MTELKAKGPR…YSFESLPQKI (566 aa)) are modulating, Pro-Rich. Residue Ser20 is modified to Phosphoserine. An LXXL motif 1 motif is present at residues 55–59 (LDGLL). The interval 66-255 (GQDLPDEKTQ…GAAAGGGAAA (190 aa)) is disordered. Ser81 is subject to Phosphoserine. Positions 115–119 (LDTLL) match the LXXL motif 2 motif. Phosphoserine occurs at positions 130 and 162. The interval 165-305 (MSRSGGKTGD…LATTMMDFIH (141 aa)) is mediates transcriptional transrepression. The short motif at 183–187 (KVLPR) is the Nuclear localization signal element. Phosphoserine is present on residues Ser190 and Ser213. Ser294 bears the Phosphoserine; by MAPK1 mark. The tract at residues 331 to 378 (GGAGAASAFAPPQSSPSASSTPVAVGDFPDCAYPPDAEPKDNAYPLYG) is disordered. Low complexity predominate over residues 335-350 (AASAFAPPQSSPSASS). Ser345 carries the phosphoserine; by MAPK modification. Residue Lys388 forms a Glycyl lysine isopeptide (Lys-Gly) (interchain with G-Cter in SUMO); alternate linkage. Lys388 participates in a covalent cross-link: Glycyl lysine isopeptide (Lys-Gly) (interchain with G-Cter in ubiquitin); alternate. Phosphoserine; by CDK2 is present on Ser400. Residues 415-454 (PDYPLGPPPQLPPRAPPSRPGEAAVTAAPASASVSSASSP) form a disordered region. Residues 418 to 433 (PLGPPPQLPPRAPPSR) are compositionally biased toward pro residues. A compositionally biased stretch (low complexity) spans 437 to 454 (AAVTAAPASASVSSASSP). An AF1; mediates transcriptional activation region spans residues 456 to 546 (STLECILYKA…VYPPYLNYLR (91 aa)). Lys531 participates in a covalent cross-link: Glycyl lysine isopeptide (Lys-Gly) (interchain with G-Cter in SUMO). 2 consecutive NR C4-type zinc fingers follow at residues 567-587 (CLIC…CGSC) and 603-627 (CAGR…LRKC). Residues 567-639 (CLICGDEASG…AGMVLGGRKF (73 aa)) constitute a DNA-binding region (nuclear receptor). Phosphoserine is present on Ser676. Residues 679–913 (QDIQLIPPLI…EFPEMMSEVI (235 aa)) form the NR LBD domain. The segment at 687–933 (LIKLLMSIEP…MVKPLLFHKK (247 aa)) is AF2; mediates transcriptional activation.

This sequence belongs to the nuclear hormone receptor family. In terms of assembly, interacts with SMARD1 and UNC45A. Interacts with CUEDC2; the interaction promotes ubiquitination, decreases sumoylation, and represses transcriptional activity. Interacts with PIAS3; the interaction promotes sumoylation of PR in a hormone-dependent manner, inhibits DNA-binding, and alters nuclear export. Interacts with SP1; the interaction requires ligand-induced phosphorylation on Ser-345 by ERK1/2-MAPK. Interacts with PRMT2. Interacts with NCOA2 and NCOA1. Interacts with KLF9. Interacts with GTF2B. In terms of processing, phosphorylated on multiple serine sites. Several of these sites are hormone-dependent. Phosphorylation on Ser-294 is highly hormone-dependent and modulates ubiquitination and sumoylation on Lys-388. Phosphorylation on Ser-345 also requires induction by hormone. Basal phosphorylation on Ser-81, Ser-162, Ser-190 and Ser-400 is increased in response to progesterone and can be phosphorylated in vitro by the CDK2-A1 complex. Increased levels of phosphorylation on Ser-400 also in the presence of EGF, heregulin, IGF, PMA and FBS. Phosphorylation at this site by CDK2 is ligand-independent, and increases nuclear translocation and transcriptional activity. Phosphorylation at Ser-162 and Ser-294, but not at Ser-190, is impaired during the G(2)/M phase of the cell cycle. Phosphorylation on Ser-345 by ERK1/2 MAPK is required for interaction with SP1. Post-translationally, sumoylation is hormone-dependent and represses transcriptional activity. Sumoylation on all three sites is enhanced by PIAS3. Desumoylated by SENP1. Sumoylation on Lys-388, the main site of sumoylation, is repressed by ubiquitination on the same site, and modulated by phosphorylation at Ser-294. Ubiquitination is hormone-dependent and represses sumoylation on the same site. Promoted by MAPK-mediated phosphorylation on Ser-294. In terms of processing, palmitoylated by ZDHHC7 and ZDHHC21. Palmitoylation is required for plasma membrane targeting and for rapid intracellular signaling via ERK and AKT kinases and cAMP generation.

It localises to the nucleus. The protein resides in the cytoplasm. In terms of biological role, the steroid hormones and their receptors are involved in the regulation of eukaryotic gene expression and affect cellular proliferation and differentiation in target tissues. Transcriptional activator of several progesteron-dependent promoters in a variety of cell types. Involved in activation of SRC-dependent MAPK signaling on hormone stimulation. The protein is Progesterone receptor (PGR) of Trachypithecus obscurus (Dusky leaf-monkey).